The primary structure comprises 207 residues: Large ribosomal subunit protein uL18 (207 aa).

This sequence belongs to the universal ribosomal protein uL18 family. In terms of assembly, part of the 50S ribosomal subunit. Contacts the 5S and 23S rRNAs.

Functionally, this is one of the proteins that bind and probably mediate the attachment of the 5S RNA into the large ribosomal subunit, where it forms part of the central protuberance. The sequence is that of Large ribosomal subunit protein uL18 from Caldivirga maquilingensis (strain ATCC 700844 / DSM 13496 / JCM 10307 / IC-167).